The primary structure comprises 186 residues: ADP-ribosylation factor-like protein 8B (186 aa).

Positions 1–19 (MLALISRLLDWFRSLFWKE) form an intramembrane region, note=Mediates targeting to membranes. GTP-binding positions include 29–35 (QYSGKTT), 71–75 (DIGGQ), and 130–133 (NKRD). K141 is covalently cross-linked (Glycyl lysine isopeptide (Lys-Gly) (interchain with G-Cter in ubiquitin)).

The protein belongs to the small GTPase superfamily. Arf family. As to quaternary structure, interacts with tubulin. Interacts with BORCS5; recruits ARL8B to lysosomes. Interacts with VPS41; the interaction mediates the recruitment of the HOPS complex to lysosomes. Interacts (GTP-bound form) with PLEKHM2 (via RUN domain); the interaction is required to recruit the motor protein kinesin-1 on lysosomes. Interacts (GTP-bound form) with PLEKHM1 (via RUN domain); the interaction is required for PLEKHM1 localization to lysosomes and for ARL8B function in delivery and degradation of endocytic and autophagic cargo in lysosomes. PLEKHM1 and PLEKHM2 compete for interaction with ARL8B. Interacts (GTP-bound form) with RUFY1; the interaction is required for RUFY1 endosomal location. When GTP-bound, interacts with RUFY3 and RUFY4, but not with RUFY1, nor RUFY2. Post-translationally, ubiquitinated at Lys-141 by RNF167, leading to its degradation.

Its subcellular location is the late endosome membrane. It is found in the lysosome membrane. The protein resides in the cytoplasm. The protein localises to the cytoskeleton. It localises to the spindle. Its subcellular location is the cell projection. It is found in the axon. The protein resides in the synapse. The protein localises to the cytolytic granule membrane. It localises to the early endosome membrane. The catalysed reaction is GTP + H2O = GDP + phosphate + H(+). Functionally, small GTPase which cycles between active GTP-bound and inactive GDP-bound states. In its active state, binds to a variety of effector proteins playing a key role in the regulation of lysosomal positioning which is important for nutrient sensing, natural killer cell-mediated cytotoxicity and antigen presentation. Along with its effectors, orchestrates lysosomal transport and fusion. Localizes specifically to lysosomal membranes and mediates anterograde lysosomal motility by recruiting PLEKHM2, which in turn recruits the motor protein kinesin-1 on lysosomes. Required for lysosomal and cytolytic granule exocytosis. Critical factor involved in NK cell-mediated cytotoxicity. Drives the polarization of cytolytic granules and microtubule-organizing centers (MTOCs) toward the immune synapse between effector NK lymphocytes and target cells. In neurons, mediates the anterograde axonal long-range transport of presynaptic lysosome-related vesicles required for presynaptic biogenesis and synaptic function. Also acts as a regulator of endosome to lysosome trafficking pathways of special significance for host defense. Recruits RUFY1 onto early endosomes regulating endosomes to trans-Golgi network proteins retrieval. Regulates cargo trafficking to lysosomes by binding to PLEKHM1 and recruiting the HOPS subunit VPS41, resulting in functional assembly of the HOPS complex on lysosomal membranes. Plays an important role in cargo delivery to lysosomes for antigen presentation and microbial killing. Directs the intersection of CD1d with lipid antigens in lysosomes, and plays a role in intersecting phagosomes with lysosomes to generate phagolysosomes that kill microbes. Involved in the process of MHC II presentation. Regulates the delivery of antigens to lysosomes and the formation of MHC II-peptide complexes through the recruitment of the HOPS complex to lysosomes allowing the fusion of late endosomes to lysosomes. May play a role in chromosome segregation. This Pongo abelii (Sumatran orangutan) protein is ADP-ribosylation factor-like protein 8B (ARL8B).